We begin with the raw amino-acid sequence, 420 residues long: MTKWKRANPNGTRDYLFEECTLIEEVEQKLRLTFLERGYEEIRTPTIEFYDVFAFQNRPIDEEKMYKFFDEKGRIIVLRPDMTIPLARVIGTQRWDTPLKVTYSGNVFRANESHSGKYNEIVQSGIEVIGIDNVRAEIECVISVIQALQKLKVQSFTIEIGQVQLYKCIVKKLSIQDEEERVLRTYIESKNYAALSNFIGEKKLDRCDETVRLLEKLPRLFGNLEVIEEAEKLASSNEMKMAIARVKEMYETIEMLGYGSYISIDLGMIQHLDYYTGVIFKGYIYEIGEEIVSGGRYDELIGNFGEMLPAVGLAVQVNQIVKALQEQQEPYERNQIDIVIHYELNRLAEAERLRNLLRKDGKNAWLSLFSNLSDTFQFARKNKIGTVVEAKNEYLVEYVWNEKWVVQKEGEASCVTFKLR.

The protein belongs to the class-II aminoacyl-tRNA synthetase family. HisZ subfamily. In terms of assembly, heteromultimer composed of HisG and HisZ subunits.

The protein localises to the cytoplasm. The protein operates within amino-acid biosynthesis; L-histidine biosynthesis; L-histidine from 5-phospho-alpha-D-ribose 1-diphosphate: step 1/9. Required for the first step of histidine biosynthesis. May allow the feedback regulation of ATP phosphoribosyltransferase activity by histidine. This Bacillus cereus (strain B4264) protein is ATP phosphoribosyltransferase regulatory subunit.